Consider the following 384-residue polypeptide: 4-hydroxy-3-methylbut-2-en-1-yl diphosphate synthase (flavodoxin) (384 aa).

[4Fe-4S] cluster contacts are provided by C280, C283, C315, and E322.

It belongs to the IspG family. The cofactor is [4Fe-4S] cluster.

The enzyme catalyses (2E)-4-hydroxy-3-methylbut-2-enyl diphosphate + oxidized [flavodoxin] + H2O + 2 H(+) = 2-C-methyl-D-erythritol 2,4-cyclic diphosphate + reduced [flavodoxin]. The protein operates within isoprenoid biosynthesis; isopentenyl diphosphate biosynthesis via DXP pathway; isopentenyl diphosphate from 1-deoxy-D-xylulose 5-phosphate: step 5/6. Its function is as follows. Converts 2C-methyl-D-erythritol 2,4-cyclodiphosphate (ME-2,4cPP) into 1-hydroxy-2-methyl-2-(E)-butenyl 4-diphosphate. In Parafrankia sp. (strain EAN1pec), this protein is 4-hydroxy-3-methylbut-2-en-1-yl diphosphate synthase (flavodoxin).